A 224-amino-acid chain; its full sequence is Small ribosomal subunit protein uS3 (224 aa).

Residues isoleucine 38–lysine 106 form the KH type-2 domain.

It belongs to the universal ribosomal protein uS3 family. In terms of assembly, part of the 30S ribosomal subunit. Forms a tight complex with proteins S10 and S14.

Binds the lower part of the 30S subunit head. Binds mRNA in the 70S ribosome, positioning it for translation. This chain is Small ribosomal subunit protein uS3, found in Lactobacillus helveticus (strain DPC 4571).